Reading from the N-terminus, the 362-residue chain is Putative protein ARB2BP (362 aa).

A helical transmembrane segment spans residues 229-245; sequence IAFIVHGYGGLVFMDLL.

Belongs to the ARB2 family.

Its subcellular location is the membrane. This chain is Putative protein ARB2BP, found in Homo sapiens (Human).